A 130-amino-acid polypeptide reads, in one-letter code: Anti-adapter protein IraD (130 aa).

This sequence belongs to the GpW/Gp25 family. IraD subfamily. Interacts with RssB.

It localises to the cytoplasm. Inhibits RpoS proteolysis by regulating RssB activity, thereby increasing the stability of the sigma stress factor RpoS during oxidative stress. Its effect on RpoS stability is due to its interaction with RssB, which probably blocks the interaction of RssB with RpoS, and the consequent delivery of the RssB-RpoS complex to the ClpXP protein degradation pathway. The sequence is that of Anti-adapter protein IraD from Escherichia coli O157:H7.